The primary structure comprises 215 residues: Cytochrome b6 (215 aa).

Residues 32–52 (IFYCLGGITLTCFLVQVATGF) form a helical membrane-spanning segment. Residue Cys35 coordinates heme c. Positions 86 and 100 each coordinate heme b. The next 3 helical transmembrane spans lie at 90 to 110 (ASMM…TGGF), 116 to 136 (LTWV…VTGY), and 186 to 206 (LHTF…FPMI). Heme b contacts are provided by His187 and His202.

The protein belongs to the cytochrome b family. PetB subfamily. As to quaternary structure, the 4 large subunits of the cytochrome b6-f complex are cytochrome b6, subunit IV (17 kDa polypeptide, PetD), cytochrome f and the Rieske protein, while the 4 small subunits are PetG, PetL, PetM and PetN. The complex functions as a dimer. Heme b serves as cofactor. The cofactor is heme c.

Its subcellular location is the plastid. The protein resides in the chloroplast thylakoid membrane. In terms of biological role, component of the cytochrome b6-f complex, which mediates electron transfer between photosystem II (PSII) and photosystem I (PSI), cyclic electron flow around PSI, and state transitions. This is Cytochrome b6 from Helianthus annuus (Common sunflower).